The chain runs to 634 residues: Sodium-dependent neutral amino acid transporter B(0)AT1 (634 aa).

Residues Met1–Tyr41 lie on the Cytoplasmic side of the membrane. Phosphoserine is present on Ser17. The chain crosses the membrane as a helical span at residues Leu42–Cys62. Residues Gln63–His65 lie on the Extracellular side of the membrane. Residues Gly66–Leu86 form a helical membrane-spanning segment. Over His87–Leu120 the chain is Cytoplasmic. A helical membrane pass occupies residues Val121–Phe141. Over Asn142 to Ser192 the chain is Extracellular. Asn158 and Asn182 each carry an N-linked (GlcNAc...) asparagine glycan. The helical transmembrane segment at Ile193–Ile213 threads the bilayer. At Arg214–Lys221 the chain is on the cytoplasmic side. The chain crosses the membrane as a helical span at residues Val222–Leu242. At Thr243–Trp268 the chain is on the extracellular side. Residue Asn258 is glycosylated (N-linked (GlcNAc...) asparagine). Residues Leu269–Phe289 form a helical membrane-spanning segment. Residues Ser290 to Val304 are Cytoplasmic-facing. Residues Ile305–Ile325 form a helical membrane-spanning segment. Topologically, residues Gly326–Ser413 are extracellular. N-linked (GlcNAc...) asparagine glycans are attached at residues Asn354 and Asn368. A helical membrane pass occupies residues Pro414 to Gly434. The Cytoplasmic segment spans residues Asn435–Glu456. Residues Leu457–Ser477 form a helical membrane-spanning segment. Residues Gly478–Ser487 lie on the Extracellular side of the membrane. Residues Tyr488–Val508 form a helical membrane-spanning segment. The Cytoplasmic portion of the chain corresponds to Tyr509–Gln531. Residues Val532–Val552 form a helical membrane-spanning segment. Residues Gln553–Trp581 are Extracellular-facing. Residues Val582 to Ile602 traverse the membrane as a helical segment. Topologically, residues Tyr603–Tyr634 are cytoplasmic. Ser627 is modified (phosphoserine).

It belongs to the sodium:neurotransmitter symporter (SNF) (TC 2.A.22) family. SLC6A19 subfamily. Interacts in a tissue-specific manner with ACE2 in small intestine and with CLTRN in the kidney. Interacts with CLTRN; this interaction is required for trafficking of SLC6A19 to the plasma membrane and for its catalytic activation in kidneys. Interacts with ACE2; this interaction is required for trafficking of SLC6A19 to the plasma membrane and for its catalytic activation in intestine. Interacts with ANPEP; the interaction positively regulates its amino acid transporter activity.

It is found in the membrane. The catalysed reaction is L-alanine(in) + Na(+)(in) = L-alanine(out) + Na(+)(out). The enzyme catalyses L-cysteine(in) + Na(+)(in) = L-cysteine(out) + Na(+)(out). It carries out the reaction L-glutamine(in) + Na(+)(in) = L-glutamine(out) + Na(+)(out). It catalyses the reaction glycine(in) + Na(+)(in) = glycine(out) + Na(+)(out). The catalysed reaction is L-isoleucine(in) + Na(+)(in) = L-isoleucine(out) + Na(+)(out). The enzyme catalyses L-leucine(in) + Na(+)(in) = L-leucine(out) + Na(+)(out). It carries out the reaction L-methionine(in) + Na(+)(in) = L-methionine(out) + Na(+)(out). It catalyses the reaction L-phenylalanine(in) + Na(+)(in) = L-phenylalanine(out) + Na(+)(out). The catalysed reaction is L-serine(in) + Na(+)(in) = L-serine(out) + Na(+)(out). The enzyme catalyses L-tryptophan(in) + Na(+)(in) = L-tryptophan(out) + Na(+)(out). It carries out the reaction L-tyrosine(in) + Na(+)(in) = L-tyrosine(out) + Na(+)(out). It catalyses the reaction L-valine(in) + Na(+)(in) = L-valine(out) + Na(+)(out). Transporter that mediates resorption of neutral amino acids across the apical membrane of renal and intestinal epithelial cells. This uptake is sodium-dependent and chloride-independent. Requires CLTRN in kidney or ACE2 in intestine for cell surface expression and amino acid transporter activity. In Pongo abelii (Sumatran orangutan), this protein is Sodium-dependent neutral amino acid transporter B(0)AT1 (SLC6A19).